The sequence spans 418 residues: Glutamyl-tRNA reductase (418 aa).

Substrate contacts are provided by residues 49-52 (TCNR), serine 109, 114-116 (EPQ), and glutamine 120. Cysteine 50 functions as the Nucleophile in the catalytic mechanism. Position 189 to 194 (189 to 194 (GAGETI)) interacts with NADP(+).

The protein belongs to the glutamyl-tRNA reductase family. As to quaternary structure, homodimer.

It carries out the reaction (S)-4-amino-5-oxopentanoate + tRNA(Glu) + NADP(+) = L-glutamyl-tRNA(Glu) + NADPH + H(+). The protein operates within porphyrin-containing compound metabolism; protoporphyrin-IX biosynthesis; 5-aminolevulinate from L-glutamyl-tRNA(Glu): step 1/2. In terms of biological role, catalyzes the NADPH-dependent reduction of glutamyl-tRNA(Glu) to glutamate 1-semialdehyde (GSA). The chain is Glutamyl-tRNA reductase from Cronobacter sakazakii (strain ATCC BAA-894) (Enterobacter sakazakii).